The chain runs to 182 residues: CDP-diacylglycerol--glycerol-3-phosphate 3-phosphatidyltransferase (182 aa).

Residues 2 to 12 (QFNIPTLLTLF) are Cytoplasmic-facing. The helical transmembrane segment at 13-37 (RVALIPFFVLAFYLPFVWAPLLCAL) threads the bilayer. Residues 38-60 (IFVFAAVTDWFDGFLARRWKQTT) are Periplasmic-facing. A helical transmembrane segment spans residues 61–81 (RFGAFLDPVADKVMVAVALVL). The Cytoplasmic segment spans residues 82 to 86 (VAEYY). Residues 87 to 107 (HSWWITLPAATMIAREIIISA) form a helical membrane-spanning segment. At 108 to 145 (LREWMAEIGKRSSVAVSWIGKVKTTAQMMALFALLWRP) the chain is on the periplasmic side. Residues 146-168 (ERIVEGIGVAALYIAAVLTFWSM) form a helical membrane-spanning segment. Over 169 to 181 (FQYLNAARHDLLE) the chain is Cytoplasmic.

It belongs to the CDP-alcohol phosphatidyltransferase class-I family.

The protein resides in the cell inner membrane. It catalyses the reaction a CDP-1,2-diacyl-sn-glycerol + sn-glycerol 3-phosphate = a 1,2-diacyl-sn-glycero-3-phospho-(1'-sn-glycero-3'-phosphate) + CMP + H(+). It participates in phospholipid metabolism; phosphatidylglycerol biosynthesis; phosphatidylglycerol from CDP-diacylglycerol: step 1/2. Catalyzes the conversion of cytidine diphosphate diacylglycerol (CDP-DG) and glycerol 3-phosphate into phosphatidylglycerol. Essential for the synthesis of anionic phospholipids, thereby playing a role in balancing the ratio of zwitterionic and anionic phospholipids, which is thought to be important for normal membrane function. The polypeptide is CDP-diacylglycerol--glycerol-3-phosphate 3-phosphatidyltransferase (Pectobacterium atrosepticum (strain SCRI 1043 / ATCC BAA-672) (Erwinia carotovora subsp. atroseptica)).